The following is a 662-amino-acid chain: Acetyl-coenzyme A synthetase (662 aa).

Residues 197-200 and threonine 317 each bind CoA; that span reads RKGK. ATP-binding positions include 393–395, 417–422, aspartate 510, and arginine 525; these read GEP and DTWWQT. Residue serine 533 participates in CoA binding. Arginine 536 is a binding site for ATP. Mg(2+) is bound by residues histidine 549 and valine 552. Position 623 is an N6-acetyllysine (lysine 623).

This sequence belongs to the ATP-dependent AMP-binding enzyme family. Requires Mg(2+) as cofactor. Post-translationally, acetylated. Deacetylation by the SIR2-homolog deacetylase activates the enzyme.

It carries out the reaction acetate + ATP + CoA = acetyl-CoA + AMP + diphosphate. Its function is as follows. Catalyzes the conversion of acetate into acetyl-CoA (AcCoA), an essential intermediate at the junction of anabolic and catabolic pathways. AcsA undergoes a two-step reaction. In the first half reaction, AcsA combines acetate with ATP to form acetyl-adenylate (AcAMP) intermediate. In the second half reaction, it can then transfer the acetyl group from AcAMP to the sulfhydryl group of CoA, forming the product AcCoA. This Helicobacter pylori (strain P12) protein is Acetyl-coenzyme A synthetase.